The primary structure comprises 201 residues: Fas apoptotic inhibitory molecule 1 (201 aa).

It belongs to the FAIM1 family.

The protein localises to the cytoplasm. In terms of biological role, plays a role as an inducible effector molecule that mediates Fas resistance produced by surface Ig engagement in B cells. This chain is Fas apoptotic inhibitory molecule 1 (Faim), found in Rattus norvegicus (Rat).